A 469-amino-acid polypeptide reads, in one-letter code: Reticulon-2 (469 aa).

Disordered stretches follow at residues 1–180 (MGQV…EASE) and 201–238 (LTPQ…NGEG). The segment covering 14-25 (APSTASSTPDST) has biased composition (low complexity). Basic and acidic residues predominate over residues 32–43 (SDFRELHTAREF). Serine 44 carries the phosphoserine modification. Basic and acidic residues predominate over residues 135–144 (RPLEELRLRL). 2 stretches are compositionally biased toward polar residues: residues 159–168 (DSATSSSTPL) and 203–226 (PQLS…QDLN). In terms of domain architecture, Reticulon spans 270-469 (VADLLYWKDT…SVSGSKAKAE (200 aa)). 2 consecutive transmembrane segments (helical) span residues 293-313 (LLCL…LLGL) and 388-408 (LLFY…LVIL).

In terms of assembly, interacts with SPAST. Interacts with BACE1. Interacts (via first transmembrane domain) with ARL6IP5/GTRAP3-18. Interacts (via N-terminus) with SLC1A1/EAAC1; the interaction promotes cell surface expression of SLC1A1. As to expression, expressed in brain and spinal cord (at protein level). In the embryonic brain cortex, expressed in neurons but not in astrocytes (at protein level).

It is found in the endoplasmic reticulum membrane. Its subcellular location is the sarcoplasmic reticulum membrane. The protein resides in the cell membrane. The protein localises to the sarcolemma. It localises to the T-tubule. It is found in the cytoplasm. Its subcellular location is the myofibril. The protein resides in the sarcomere. The protein localises to the z line. It localises to the cytoskeleton. In terms of biological role, inhibits amyloid precursor protein processing, probably by blocking BACE1 activity. Enhances trafficking of the glutamate transporter SLC1A1/EAAC1 from the endoplasmic reticulum to the cell surface. Plays a role in the translocation of SLC2A4/GLUT4 from intracellular membranes to the cell membrane which facilitates the uptake of glucose into the cell. In Rattus norvegicus (Rat), this protein is Reticulon-2.